Reading from the N-terminus, the 283-residue chain is Pantothenate synthetase (283 aa).

30–37 contributes to the ATP binding site; that stretch reads MGNLHDAH. Catalysis depends on histidine 37, which acts as the Proton donor. Glutamine 61 provides a ligand contact to (R)-pantoate. Position 61 (glutamine 61) interacts with beta-alanine. 149 to 152 is a binding site for ATP; it reads GVKD. Residue glutamine 155 coordinates (R)-pantoate. Residues valine 178 and 186-189 contribute to the ATP site; that span reads MSSR.

It belongs to the pantothenate synthetase family. As to quaternary structure, homodimer.

The protein localises to the cytoplasm. The catalysed reaction is (R)-pantoate + beta-alanine + ATP = (R)-pantothenate + AMP + diphosphate + H(+). Its pathway is cofactor biosynthesis; (R)-pantothenate biosynthesis; (R)-pantothenate from (R)-pantoate and beta-alanine: step 1/1. Its function is as follows. Catalyzes the condensation of pantoate with beta-alanine in an ATP-dependent reaction via a pantoyl-adenylate intermediate. This Cellvibrio japonicus (strain Ueda107) (Pseudomonas fluorescens subsp. cellulosa) protein is Pantothenate synthetase.